We begin with the raw amino-acid sequence, 159 residues long: MITKAIYPGTFDPITNGHLDLVTRASAMFSHVILAIADSSSKKPMFTLDERVALAKKVTAPLKNVEVLGFSELMAEFAKKHNANILVRGLRSVSDFEYEWQLANMNRHLMPKLESVFLIPSEKWSFISSSLVKEVARHGGDITPFLPKPVTKALLAKLA.

Thr10 contributes to the substrate binding site. ATP is bound by residues 10-11 (TF) and His18. Lys42, Met74, and Arg88 together coordinate substrate. ATP-binding positions include 89–91 (GLR), Glu99, and 124–130 (WSFISSS).

It belongs to the bacterial CoaD family. In terms of assembly, homohexamer. Mg(2+) is required as a cofactor.

It is found in the cytoplasm. The enzyme catalyses (R)-4'-phosphopantetheine + ATP + H(+) = 3'-dephospho-CoA + diphosphate. It participates in cofactor biosynthesis; coenzyme A biosynthesis; CoA from (R)-pantothenate: step 4/5. Its function is as follows. Reversibly transfers an adenylyl group from ATP to 4'-phosphopantetheine, yielding dephospho-CoA (dPCoA) and pyrophosphate. The polypeptide is Phosphopantetheine adenylyltransferase (Yersinia pestis).